Consider the following 192-residue polypeptide: ATP synthase subunit b (192 aa).

A helical membrane pass occupies residues 7 to 27; the sequence is LLLVLGVMLLATGVALAAGGE.

This sequence belongs to the ATPase B chain family. F-type ATPases have 2 components, F(1) - the catalytic core - and F(0) - the membrane proton channel. F(1) has five subunits: alpha(3), beta(3), gamma(1), delta(1), epsilon(1). F(0) has three main subunits: a(1), b(2) and c(10-14). The alpha and beta chains form an alternating ring which encloses part of the gamma chain. F(1) is attached to F(0) by a central stalk formed by the gamma and epsilon chains, while a peripheral stalk is formed by the delta and b chains.

The protein resides in the cell inner membrane. Its function is as follows. F(1)F(0) ATP synthase produces ATP from ADP in the presence of a proton or sodium gradient. F-type ATPases consist of two structural domains, F(1) containing the extramembraneous catalytic core and F(0) containing the membrane proton channel, linked together by a central stalk and a peripheral stalk. During catalysis, ATP synthesis in the catalytic domain of F(1) is coupled via a rotary mechanism of the central stalk subunits to proton translocation. Functionally, component of the F(0) channel, it forms part of the peripheral stalk, linking F(1) to F(0). The polypeptide is ATP synthase subunit b (Oleidesulfovibrio alaskensis (strain ATCC BAA-1058 / DSM 17464 / G20) (Desulfovibrio alaskensis)).